A 469-amino-acid polypeptide reads, in one-letter code: Proline--tRNA ligase (469 aa).

This sequence belongs to the class-II aminoacyl-tRNA synthetase family. ProS type 3 subfamily. Homodimer.

The protein resides in the cytoplasm. The catalysed reaction is tRNA(Pro) + L-proline + ATP = L-prolyl-tRNA(Pro) + AMP + diphosphate. Catalyzes the attachment of proline to tRNA(Pro) in a two-step reaction: proline is first activated by ATP to form Pro-AMP and then transferred to the acceptor end of tRNA(Pro). This Methanosphaera stadtmanae (strain ATCC 43021 / DSM 3091 / JCM 11832 / MCB-3) protein is Proline--tRNA ligase.